The primary structure comprises 262 residues: Large ribosomal subunit protein uL5c (262 aa).

The transit peptide at 1 to 39 directs the protein to the chloroplast; it reads MASPSLLQSSASSFHGRFSPLAAPSSARMLSPPLRNVVK.

It belongs to the universal ribosomal protein uL5 family. In terms of assembly, part of the 50S ribosomal subunit; contacts the 5S rRNA.

It is found in the plastid. It localises to the chloroplast. Binds 5S rRNA, forms part of the central protuberance of the 50S subunit. The protein is Large ribosomal subunit protein uL5c (RPL5) of Arabidopsis thaliana (Mouse-ear cress).